The sequence spans 156 residues: Ribosomal RNA large subunit methyltransferase H (156 aa).

Residues L73, G104, and 123–128 each bind S-adenosyl-L-methionine; that span reads VSSLTL.

The protein belongs to the RNA methyltransferase RlmH family. As to quaternary structure, homodimer.

The protein resides in the cytoplasm. The catalysed reaction is pseudouridine(1915) in 23S rRNA + S-adenosyl-L-methionine = N(3)-methylpseudouridine(1915) in 23S rRNA + S-adenosyl-L-homocysteine + H(+). Functionally, specifically methylates the pseudouridine at position 1915 (m3Psi1915) in 23S rRNA. The sequence is that of Ribosomal RNA large subunit methyltransferase H from Paraburkholderia xenovorans (strain LB400).